We begin with the raw amino-acid sequence, 387 residues long: Eukaryotic translation initiation factor 3 subunit M (387 aa).

Residues leucine 181–histidine 340 enclose the PCI domain.

It belongs to the eIF-3 subunit M family. Component of the eukaryotic translation initiation factor 3 (eIF-3) complex. The eIF-3 complex interacts with pix.

It localises to the cytoplasm. The protein localises to the golgi apparatus. In terms of biological role, component of the eukaryotic translation initiation factor 3 (eIF-3) complex, which is involved in protein synthesis of a specialized repertoire of mRNAs and, together with other initiation factors, stimulates binding of mRNA and methionyl-tRNAi to the 40S ribosome. The eIF-3 complex specifically targets and initiates translation of a subset of mRNAs involved in cell proliferation. The chain is Eukaryotic translation initiation factor 3 subunit M from Drosophila grimshawi (Hawaiian fruit fly).